We begin with the raw amino-acid sequence, 520 residues long: Ribonuclease Y (520 aa).

The chain crosses the membrane as a helical span at residues 5-25 (ITIISSLLFLIVGLVVGSLIF). Positions 70-127 (RTEIENELRGRRTETQKAENRLLQREENLDRKDTSLSKREATLERKEESISKRQQQIE) are disordered. A KH domain is found at 210-273 (TVSVVTLPND…EIARIALEKL (64 aa)). Residues 336–429 (VLNHSLEVSK…VAAADALSAA (94 aa)) enclose the HD domain.

This sequence belongs to the RNase Y family.

It localises to the cell membrane. Endoribonuclease that initiates mRNA decay. This chain is Ribonuclease Y, found in Listeria welshimeri serovar 6b (strain ATCC 35897 / DSM 20650 / CCUG 15529 / CIP 8149 / NCTC 11857 / SLCC 5334 / V8).